Here is a 312-residue protein sequence, read N- to C-terminus: Olfactory receptor 6Z7 (312 aa).

Topologically, residues 1–29 (MERSLALANMTRVQQFILLGLSTRLDIRD) are extracellular. Asparagine 9 carries an N-linked (GlcNAc...) asparagine glycan. Residues 30-50 (ALFAVFLTLYLLTLLENTLII) traverse the membrane as a helical segment. Over 51-69 (YLICSHKELHKPMYFFLGN) the chain is Cytoplasmic. A helical membrane pass occupies residues 70 to 90 (LSCLEMCYVSVTMPTLLMGLW). Residue asparagine 91 is a topological domain, extracellular. The helical transmembrane segment at 92–112 (GLYHIPFIACMTQLFFFIVLV) threads the bilayer. Cysteine 101 and cysteine 193 are joined by a disulfide. Residues 113–141 (GTECILLASMAYDRYVAICRPLHYPVLMR) lie on the Cytoplasmic side of the membrane. Residues 142-162 (PQVCLGLAMISWLGGLLVSMI) traverse the membrane as a helical segment. The Extracellular portion of the chain corresponds to 163–195 (KTTCIATLSYCGPNVLNHFFCDVSPLLNLSCTH). Asparagine 190 carries an N-linked (GlcNAc...) asparagine glycan. The helical transmembrane segment at 196 to 216 (VALTELVDFISAIVILWGCFL) threads the bilayer. Topologically, residues 217–241 (TTMASYVAIGRAVLRMPSTTARYKA) are cytoplasmic. The helical transmembrane segment at 242–262 (FSTCASHLVVVGIFYSVTIFI) threads the bilayer. Over 263 to 275 (YARPKRIEAMDLN) the chain is Extracellular. The helical transmembrane segment at 276 to 296 (KVLSVIYTVVTPMCNPVIYCL) threads the bilayer. The Cytoplasmic segment spans residues 297 to 312 (RNKEVQVALHRTMHWS).

It belongs to the G-protein coupled receptor 1 family.

Its subcellular location is the cell membrane. Odorant receptor. The sequence is that of Olfactory receptor 6Z7 from Mus musculus (Mouse).